A 118-amino-acid polypeptide reads, in one-letter code: Mating-type P-specific polypeptide Pc (118 aa).

The HMG box DNA-binding region spans 29–97 (KTTIYKNGFM…VRKQIAKLER (69 aa)).

The protein localises to the nucleus. Functionally, mating type proteins are sequence specific DNA-binding proteins that act as master switches in yeast differentiation by controlling gene expression in a cell type-specific fashion. Required for conjugation and efficient meiosis. In Schizosaccharomyces kambucha (Fission yeast), this protein is Mating-type P-specific polypeptide Pc (matPc).